The sequence spans 493 residues: MSELTALTIAEARDKLKAKAITATELTDAYLSAIDAANDAINAYVAVTHDQARSMAKASDERIAKGEAGALEGIPLGVKDLFATKGVHTQACSHILDGFKPEYESTVTANLWADGAVMLGKLNMDEFAMGSSNETSYYGPVKNPWRAKGSNADLVPGGSSGGSAAAVAAHLCAGATATDTGGSIRQPAAFTGTVGIKPTYGRVSRWGTVAFASSLDQAGPIARDVRDAAILMKSMASLDLKDTTSVDLPVPDYEAALGRSVKGMKIGIPREYRVDGMPGEIEELWQKGIQYLKDAGAEIVDISLPHTKYALPAYYIVAPAEASSNLARYDGVRYGLRVPGKDIADMYEQTRAAGFGKEVKRRIMIGTYVLSAGYYDAYYLRAQKVRTLIKKDFEDVFAKGVDAILTPATPSAAFSLADEVLANDPVKMYLNDIFTVIVNMAGLPGIAVPAGLNGQGLPLGLQLIGRPFEEETLFQAAHVIEQAAGRFTPAKWW.

Catalysis depends on charge relay system residues lysine 79 and serine 159. Serine 183 acts as the Acyl-ester intermediate in catalysis.

This sequence belongs to the amidase family. GatA subfamily. In terms of assembly, heterotrimer of A, B and C subunits.

The catalysed reaction is L-glutamyl-tRNA(Gln) + L-glutamine + ATP + H2O = L-glutaminyl-tRNA(Gln) + L-glutamate + ADP + phosphate + H(+). In terms of biological role, allows the formation of correctly charged Gln-tRNA(Gln) through the transamidation of misacylated Glu-tRNA(Gln) in organisms which lack glutaminyl-tRNA synthetase. The reaction takes place in the presence of glutamine and ATP through an activated gamma-phospho-Glu-tRNA(Gln). In Brucella melitensis biotype 2 (strain ATCC 23457), this protein is Glutamyl-tRNA(Gln) amidotransferase subunit A.